Reading from the N-terminus, the 372-residue chain is tRNA 2-selenouridine synthase (372 aa).

Residues 17–140 (FLQDIPLIDV…LRNFLLTTLE (124 aa)) form the Rhodanese domain. Cys100 acts as the S-selanylcysteine intermediate in catalysis.

Belongs to the SelU family. In terms of assembly, monomer.

It carries out the reaction 5-methylaminomethyl-2-thiouridine(34) in tRNA + selenophosphate + (2E)-geranyl diphosphate + H2O + H(+) = 5-methylaminomethyl-2-selenouridine(34) in tRNA + (2E)-thiogeraniol + phosphate + diphosphate. It catalyses the reaction 5-methylaminomethyl-2-thiouridine(34) in tRNA + (2E)-geranyl diphosphate = 5-methylaminomethyl-S-(2E)-geranyl-thiouridine(34) in tRNA + diphosphate. The catalysed reaction is 5-methylaminomethyl-S-(2E)-geranyl-thiouridine(34) in tRNA + selenophosphate + H(+) = 5-methylaminomethyl-2-(Se-phospho)selenouridine(34) in tRNA + (2E)-thiogeraniol. The enzyme catalyses 5-methylaminomethyl-2-(Se-phospho)selenouridine(34) in tRNA + H2O = 5-methylaminomethyl-2-selenouridine(34) in tRNA + phosphate. Functionally, involved in the post-transcriptional modification of the uridine at the wobble position (U34) of tRNA(Lys), tRNA(Glu) and tRNA(Gln). Catalyzes the conversion of 2-thiouridine (S2U-RNA) to 2-selenouridine (Se2U-RNA). Acts in a two-step process involving geranylation of 2-thiouridine (S2U) to S-geranyl-2-thiouridine (geS2U) and subsequent selenation of the latter derivative to 2-selenouridine (Se2U) in the tRNA chain. In Serratia proteamaculans (strain 568), this protein is tRNA 2-selenouridine synthase.